The sequence spans 268 residues: Tubulin-specific chaperone C (268 aa).

In terms of domain architecture, C-CAP/cofactor C-like spans 98-255; sequence PAYTTTLKKH…SAFAFEDFDI (158 aa).

Its subcellular location is the cytoplasm. The protein resides in the cytoskeleton. Its function is as follows. Tubulin-folding protein; involved in the early step of the tubulin folding pathway. The sequence is that of Tubulin-specific chaperone C (CIN2) from Saccharomyces cerevisiae (strain ATCC 204508 / S288c) (Baker's yeast).